The chain runs to 445 residues: Retrovirus-related Pol polyprotein from type-1 retrotransposable element R2 (445 aa).

A Reverse transcriptase domain is found at 1 to 114; sequence QPSVFNLVKW…LSRDDSLAKA (114 aa). Residues 115–445 are nucleic acid-binding endonuclease; that stretch reads MLASAGPAAE…GATPRQLIEY (331 aa). Basic residues predominate over residues 380–389; it reads GPRPAHHHQP. The interval 380–445 is disordered; it reads GPRPAHHHQP…GATPRQLIEY (66 aa). Residues 396 to 405 show a composition bias toward polar residues; it reads ATANTGTLQS.

The enzyme catalyses DNA(n) + a 2'-deoxyribonucleoside 5'-triphosphate = DNA(n+1) + diphosphate. This Popillia japonica (Japanese beetle) protein is Retrovirus-related Pol polyprotein from type-1 retrotransposable element R2.